We begin with the raw amino-acid sequence, 638 residues long: 1-deoxy-D-xylulose-5-phosphate synthase (638 aa).

Thiamine diphosphate contacts are provided by residues His-75 and 116 to 118 (AHS). Mg(2+) is bound at residue Asp-147. Residues 148–149 (GA), Asn-177, Tyr-288, and Glu-370 contribute to the thiamine diphosphate site. Residue Asn-177 coordinates Mg(2+).

The protein belongs to the transketolase family. DXPS subfamily. In terms of assembly, homodimer. It depends on Mg(2+) as a cofactor. Thiamine diphosphate serves as cofactor.

It catalyses the reaction D-glyceraldehyde 3-phosphate + pyruvate + H(+) = 1-deoxy-D-xylulose 5-phosphate + CO2. It functions in the pathway metabolic intermediate biosynthesis; 1-deoxy-D-xylulose 5-phosphate biosynthesis; 1-deoxy-D-xylulose 5-phosphate from D-glyceraldehyde 3-phosphate and pyruvate: step 1/1. Catalyzes the acyloin condensation reaction between C atoms 2 and 3 of pyruvate and glyceraldehyde 3-phosphate to yield 1-deoxy-D-xylulose-5-phosphate (DXP). The chain is 1-deoxy-D-xylulose-5-phosphate synthase from Cupriavidus taiwanensis (strain DSM 17343 / BCRC 17206 / CCUG 44338 / CIP 107171 / LMG 19424 / R1) (Ralstonia taiwanensis (strain LMG 19424)).